Consider the following 83-residue polypeptide: Conotoxin Pu6.1 (83 aa).

The N-terminal stretch at 1 to 19 is a signal peptide; that stretch reads MKLVLAIVLILMLVSLSTG. The propeptide occupies 20–42; it reads AEESGQEISMVGPPLYIWDPIPP. 3 cysteine pairs are disulfide-bonded: cysteine 43–cysteine 57, cysteine 50–cysteine 62, and cysteine 56–cysteine 78.

It belongs to the conotoxin I3 superfamily. Expressed by the venom duct.

The protein localises to the secreted. The sequence is that of Conotoxin Pu6.1 from Conus pulicarius (Flea-bitten cone).